Here is a 253-residue protein sequence, read N- to C-terminus: 5-oxoprolinase subunit A (253 aa).

The protein belongs to the LamB/PxpA family. As to quaternary structure, forms a complex composed of PxpA, PxpB and PxpC.

The enzyme catalyses 5-oxo-L-proline + ATP + 2 H2O = L-glutamate + ADP + phosphate + H(+). Functionally, catalyzes the cleavage of 5-oxoproline to form L-glutamate coupled to the hydrolysis of ATP to ADP and inorganic phosphate. The polypeptide is 5-oxoprolinase subunit A (Bacillus cereus (strain Q1)).